The following is a 348-amino-acid chain: Rhodopsin (348 aa).

Residues 1–33 (TEGPYFYVPMVNTTGIVRSPYEYPQYYLVNPAA) lie on the Extracellular side of the membrane. N-linked (GlcNAc...) asparagine glycosylation is present at Asn12. A helical membrane pass occupies residues 34–58 (FAILGAYMFFLIIVGFPVNFMTLYV). Topologically, residues 59–70 (TLEHKKLRTPLN) are cytoplasmic. A helical transmembrane segment spans residues 71–93 (YILLNLAVADLFMVIGGFTTTMY). Residues 94-107 (TSMHGYFVLGRLGC) lie on the Extracellular side of the membrane. Cys107 and Cys184 are oxidised to a cystine. The helical transmembrane segment at 108-130 (NLEGFFATLGGMISLWSLAVLAI) threads the bilayer. The short motif at 131-133 (ERW) is the 'Ionic lock' involved in activated form stabilization element. Topologically, residues 131–149 (ERWVVVCKPISNFRFGENH) are cytoplasmic. A helical membrane pass occupies residues 150–170 (AIMGVSLTWGMALACTVPPLV). The Extracellular portion of the chain corresponds to 171–199 (GWSRYIPEGMQCSCGIDYYTRAEGFNNET). Asn197 carries N-linked (GlcNAc...) asparagine glycosylation. A helical membrane pass occupies residues 200–221 (FVLYMFCCHFTVPLTIIFFCYG). Over 222-249 (RLLCAVKEAAAAQQESETTQRAEREVTR) the chain is Cytoplasmic. Residues 250–271 (MVVIMVIGFLVCWLPYASVAWF) form a helical membrane-spanning segment. Residues 272–283 (VFTHQGSEFGPL) lie on the Extracellular side of the membrane. A helical membrane pass occupies residues 284-305 (FMTIPAFFAKSSAIYNPMIYIC). Lys293 bears the N6-(retinylidene)lysine mark. Residues 306 to 348 (MNKQFRHCMITTLFCGKNPFEGEEEGASSTKTEASSASSVSPA) lie on the Cytoplasmic side of the membrane. Cys320 is lipidated: S-palmitoyl cysteine. Residues 327 to 348 (GEEEGASSTKTEASSASSVSPA) are disordered. Over residues 332–348 (ASSTKTEASSASSVSPA) the composition is skewed to low complexity.

It belongs to the G-protein coupled receptor 1 family. Opsin subfamily. In terms of processing, phosphorylated on some or all of the serine and threonine residues present in the C-terminal region. Contains one covalently linked retinal chromophore.

It is found in the membrane. The protein resides in the cell projection. It localises to the cilium. Its subcellular location is the photoreceptor outer segment. In terms of biological role, photoreceptor required for image-forming vision at low light intensity. While most salt water fish species use retinal as chromophore, most freshwater fish use 3-dehydroretinal, or a mixture of retinal and 3-dehydroretinal. Light-induced isomerization of 11-cis to all-trans retinal triggers a conformational change that activates signaling via G-proteins. Subsequent receptor phosphorylation mediates displacement of the bound G-protein alpha subunit by arrestin and terminates signaling. This Sargocentron xantherythrum (Hawaiian squirrelfish) protein is Rhodopsin (rho).